The primary structure comprises 91 residues: Acylphosphatase (91 aa).

Residues Cys-3 to Tyr-91 form the Acylphosphatase-like domain. Catalysis depends on residues Arg-18 and Asn-36.

Belongs to the acylphosphatase family.

It carries out the reaction an acyl phosphate + H2O = a carboxylate + phosphate + H(+). This Dehalococcoides mccartyi (strain ATCC BAA-2266 / KCTC 15142 / 195) (Dehalococcoides ethenogenes (strain 195)) protein is Acylphosphatase (acyP).